Consider the following 62-residue polypeptide: Photosystem II reaction center protein Z (62 aa).

A run of 2 helical transmembrane segments spans residues 8–28 and 41–61; these read AVFALIATSLILVIGVPVVFA and FSGTSLWIGLVFLVGILNSLI.

The protein belongs to the PsbZ family. PSII is composed of 1 copy each of membrane proteins PsbA, PsbB, PsbC, PsbD, PsbE, PsbF, PsbH, PsbI, PsbJ, PsbK, PsbL, PsbM, PsbT, PsbY, PsbZ, Psb30/Ycf12, at least 3 peripheral proteins of the oxygen-evolving complex and a large number of cofactors. It forms dimeric complexes.

The protein localises to the plastid. The protein resides in the chloroplast thylakoid membrane. Functionally, may control the interaction of photosystem II (PSII) cores with the light-harvesting antenna, regulates electron flow through the 2 photosystem reaction centers. PSII is a light-driven water plastoquinone oxidoreductase, using light energy to abstract electrons from H(2)O, generating a proton gradient subsequently used for ATP formation. The polypeptide is Photosystem II reaction center protein Z (Piper cenocladum (Ant piper)).